A 108-amino-acid chain; its full sequence is Insulin-1 (108 aa).

An N-terminal signal peptide occupies residues 1-24 (MALLVHFLPLLALLALWEPKPTQA). 3 disulfides stabilise this stretch: Cys-31/Cys-94, Cys-43/Cys-107, and Cys-93/Cys-98. The propeptide at 57-85 (EVEDPQVEQLELGGSPGDLQTLALEVARQ) is c peptide.

Belongs to the insulin family. Heterodimer of a B chain and an A chain linked by two disulfide bonds.

The protein resides in the secreted. Insulin decreases blood glucose concentration. It increases cell permeability to monosaccharides, amino acids and fatty acids. It accelerates glycolysis, the pentose phosphate cycle, and glycogen synthesis in liver. This chain is Insulin-1 (Ins1), found in Mus musculus (Mouse).